The primary structure comprises 689 residues: Glycine--tRNA ligase beta subunit (689 aa).

Belongs to the class-II aminoacyl-tRNA synthetase family. As to quaternary structure, tetramer of two alpha and two beta subunits.

It is found in the cytoplasm. It carries out the reaction tRNA(Gly) + glycine + ATP = glycyl-tRNA(Gly) + AMP + diphosphate. The protein is Glycine--tRNA ligase beta subunit of Cronobacter sakazakii (strain ATCC BAA-894) (Enterobacter sakazakii).